The primary structure comprises 657 residues: Macrolide export ATP-binding/permease protein MacB (657 aa).

The region spanning 5–242 (LELLDVHRTY…RAVTGESAFD (238 aa)) is the ABC transporter domain. An ATP-binding site is contributed by 41–48 (GASGSGKS). The next 4 membrane-spanning stretches (helical) occupy residues 276–296 (FLSVLGIFVGVASVIAMMALG), 538–558 (IAAISLLVGGIGIMNIMLVSV), 596–616 (IGVFAGVGISLILAFFAGWAV), and 620–640 (LLSVVLATTFSALIGVFFGLW).

Belongs to the ABC transporter superfamily. Macrolide exporter (TC 3.A.1.122) family. In terms of assembly, homodimer.

Its subcellular location is the cell inner membrane. In terms of biological role, non-canonical ABC transporter that contains transmembrane domains (TMD), which form a pore in the inner membrane, and an ATP-binding domain (NBD), which is responsible for energy generation. Confers resistance against macrolides. In Chlorobium phaeobacteroides (strain DSM 266 / SMG 266 / 2430), this protein is Macrolide export ATP-binding/permease protein MacB.